Consider the following 246-residue polypeptide: MNNVIPLQNSPERVSLLPIAPGVDFATALSLRRMATSTGATPAYLLAPEVSALLFYMPDQRHHMLFATLWNTGMRIGEARIVTPESFDLDGVRPFVRVLSEKVRARRGRPPKDEVRLVPLTDISYVRQMESWMITTRPRRREPLWAVTDETMRNWLKQAVRRAEADGVHFSISVTPHTFRHSYIMHMLYHRQPRKVIQALAGHRDPRSMEVYTRVFALDMAATLAVPFTGDGRDAAEILRTLPPLK.

The 186-residue stretch at Ala40 to Ala225 folds into the Tyr recombinase domain. Active-site residues include Arg75, Lys102, His177, Arg180, and His203. The O-(3'-phospho-DNA)-tyrosine intermediate role is filled by Tyr212.

The protein belongs to the 'phage' integrase family.

In Escherichia coli, this protein is Probable site-specific recombinase in afa region (int).